We begin with the raw amino-acid sequence, 1336 residues long: MGAGGRRMPVPPARLLLLPLLPCLLLLAPGTRGAPGCPVPIRGCKCSGERPKGLSGGAHNPARRRVVCGGGDLPEPPDPGLLPNGTITLLLSNNKITGLRNGSFLGLSLLEKLDLRSNVISTVQPGAFLGLGELKRLDLSNNRIGCLTSETFQGLPRLLRLNISGNIYSSLQPGVFDELPALKIVDFGTEFLTCDCRLRWLLPWARNHSLQLSERTLCAYPSALHAHALSSLQESQLRCEGALELHTHYLIPSLRQVVFQGDRLPFQCSASYLGNDTRIHWYHNGAPMESDEQAGIVLAENLIHDCTFITSELTLSHIGVWASGEWECSVSTVQGNTSKKVEIVVLETSASYCPAERVTNNRGDFRWPRTLAGITAYQSCLQYPFTSVPLSGGAPGTRASRRCDRAGRWEPGDYSHCLYTNDITRVLYTFVLMPINASNALTLAHQLRVYTAEAASFSDMMDVVYVAQMIQKFLGYVDQIKELVEVMVDMASNLMLVDEHLLWLAQREDKACSGIVGALERIGGAALSPHAQHISVNSRNVALEAYLIKPHSYVGLTCTAFQRREVGVSGAQPSSVGQDAPVEPEPLADQQLRFRCTTGRPNISLSSFHIKNSVALASIQLPPSLFSTLPAALAPPVPPDCTLQLLVFRNGRLFRSHGNNTSRPGAAGPGKRRGVATPVIFAGTSGCGVGNLTEPVAVSLRHWAEGADPMAAWWNQDGPGGWSSEGCRLRYSQPNVSSLYCQHLGNVAVLMELNAFPREAGGSGAGLHPVVYPCTALLLLCLFSTIITYILNHSSIHVSRKGWHMLLNLCFHMAMTSAVFVGGVTLTNYQMVCQAVGITLHYSSLSSLLWMGVKARVLHKELSWRAPPLEEGEAAPPGPRPMLRFYLIAGGIPLIICGITAAVNIHNYRDHSPYCWLVWRPSLGAFYIPVALILPITWIYFLCAGLHLRSHVAQNPKQGNRISLEPGEELRGSTRLRSSGVLLNDSGSLLATVSAGVGTPAPPEDGDGVYSPGVQLGALMTTHFLYLAMWACGALAVSQRWLPRVVCSCLYGVAASALGLFVFTHHCARRRDVRASWRACCPPASPSASHVPARALPTATEDGSPVLGEGPASLKSSPSGSSGRAPPPPCKLTNLQVAQSQVCEASVAARGDGEPEPTGSRGSLAPRHHNNLHHGRRVHKSRAKGHRAGETGGKSRLKALRAGTSPGAPELLSSESGSLHNSPSDSYPGSSRNSPGDGLPLEGEPMLTPSEGSDTSAAPIAETGRPGQRRSASRDNLKGSGSALERESKRRSYPLNTTSLNGAPKGGKYEDASVTGAEAIAGGSMKTGLWKSETTV.

The N-terminal stretch at 1 to 33 (MGAGGRRMPVPPARLLLLPLLPCLLLLAPGTRG) is a signal peptide. Residues 34 to 769 (APGCPVPIRG…AGGSGAGLHP (736 aa)) are Extracellular-facing. N-linked (GlcNAc...) asparagine glycosylation is found at Asn-84 and Asn-101. 4 LRR repeats span residues 85–106 (GTITLLLSNNKITGLRNGSFLG), 109–130 (LLEKLDLRSNVISTVQPGAFLG), 133–154 (ELKRLDLSNNRIGCLTSETFQG), and 157–178 (RLLRLNISGNIYSSLQPGVFDE). Residue Asn-162 is glycosylated (N-linked (GlcNAc...) asparagine). The 52-residue stretch at 190-241 (EFLTCDCRLRWLLPWARNHSLQLSERTLCAYPSALHAHALSSLQESQLRCEG) folds into the LRRCT domain. The Ig-like domain maps to 247–344 (THYLIPSLRQ…GNTSKKVEIV (98 aa)). Cys-268 and Cys-328 are joined by a disulfide. The N-linked (GlcNAc...) asparagine glycan is linked to Asn-275. The RGD motif lies at 362 to 364 (RGD). The GAIN-B domain occupies 594–757 (FRCTTGRPNI…AVLMELNAFP (164 aa)). 3 N-linked (GlcNAc...) asparagine glycosylation sites follow: Asn-602, Asn-691, and Asn-735. Positions 711–757 (AAWWNQDGPGGWSSEGCRLRYSQPNVSSLYCQHLGNVAVLMELNAFP) are GPS. Cys-727 and Cys-741 are disulfide-bonded. A helical membrane pass occupies residues 770 to 790 (VVYPCTALLLLCLFSTIITYI). At 791 to 805 (LNHSSIHVSRKGWHM) the chain is on the cytoplasmic side. The chain crosses the membrane as a helical span at residues 806–826 (LLNLCFHMAMTSAVFVGGVTL). Over 827–830 (TNYQ) the chain is Extracellular. The chain crosses the membrane as a helical span at residues 831-851 (MVCQAVGITLHYSSLSSLLWM). The Cytoplasmic portion of the chain corresponds to 852–884 (GVKARVLHKELSWRAPPLEEGEAAPPGPRPMLR). A helical membrane pass occupies residues 885–905 (FYLIAGGIPLIICGITAAVNI). At 906–922 (HNYRDHSPYCWLVWRPS) the chain is on the extracellular side. A helical membrane pass occupies residues 923 to 943 (LGAFYIPVALILPITWIYFLC). Topologically, residues 944-1016 (AGLHLRSHVA…DGVYSPGVQL (73 aa)) are cytoplasmic. A helical transmembrane segment spans residues 1017–1037 (GALMTTHFLYLAMWACGALAV). The Extracellular segment spans residues 1038 to 1044 (SQRWLPR). The helical transmembrane segment at 1045–1065 (VVCSCLYGVAASALGLFVFTH) threads the bilayer. At 1066–1336 (HCARRRDVRA…TGLWKSETTV (271 aa)) the chain is on the cytoplasmic side. The span at 1084–1095 (ASPSASHVPARA) shows a compositional bias: low complexity. The tract at residues 1084–1310 (ASPSASHVPA…NGAPKGGKYE (227 aa)) is disordered. Ser-1104 bears the Phosphoserine mark. Positions 1110-1124 (GPASLKSSPSGSSGR) are enriched in low complexity. A compositionally biased stretch (polar residues) spans 1133 to 1143 (TNLQVAQSQVC). The span at 1166–1186 (PRHHNNLHHGRRVHKSRAKGH) shows a compositional bias: basic residues. The segment covering 1213–1234 (SSESGSLHNSPSDSYPGSSRNS) has biased composition (polar residues). The PDZ-binding motif lies at 1333–1336 (ETTV).

It belongs to the G-protein coupled receptor 2 family. Adhesion G-protein coupled receptor (ADGR) subfamily. Interacts with RECK; the interaction is direct. Interacts (via PDZ-binding motif) with DLG1 (via PDZ domains). The cleaved extracellular subunit interacts with the integrin heterodimer ITGAV:ITGB3. Post-translationally, glycosylated. In terms of processing, proteolytically cleaved into two subunits, an extracellular subunit and a seven-transmembrane subunit. Cleaved by thrombin (F2) and MMP1. Also cleaved by MMP9, with lower efficiency. Presence of the protein disulfide-isomerase P4HB at the cell surface is additionally required for shedding of the extracellular subunit, suggesting that the subunits are linked by disulfide bonds. Shedding is enhanced by the growth factor FGF2 and may promote cell survival during angiogenesis. Abundantly expressed in the vasculature of the developing embryo. Expression in normal adult tissues is specifically vascular with endothelial expression in CNS, including brain and retina and more widespread pericyte expression in the brain and organs, including the kidney, pancreas and corpus luteum.

It is found in the cell membrane. The protein localises to the cell projection. Its subcellular location is the filopodium. Endothelial receptor which functions together with RECK to enable brain endothelial cells to selectively respond to Wnt7 signals (WNT7A or WNT7B). Plays a key role in Wnt7-specific responses, such as endothelial cell sprouting and migration in the forebrain and neural tube, and establishment of the blood-brain barrier. Acts as a Wnt7-specific coactivator of canonical Wnt signaling: required to deliver RECK-bound Wnt7 to frizzled by assembling a higher-order RECK-ADGRA2-Fzd-LRP5-LRP6 complex. ADGRA2-tethering function does not rely on its G-protein coupled receptor (GPCR) structure but instead on its combined capacity to interact with RECK extracellularly and recruit the Dishevelled scaffolding protein intracellularly. Binds to the glycosaminoglycans heparin, heparin sulfate, chondroitin sulfate and dermatan sulfate. This is Adhesion G protein-coupled receptor A2 from Mus musculus (Mouse).